Reading from the N-terminus, the 69-residue chain is Sec-independent protein translocase protein TatA (69 aa).

Residues 1-21 (MFGLGGQELVLILLIVLLLFG) traverse the membrane as a helical segment. Over residues 47–63 (EEEFNKSMDDNPKKEKA) the composition is skewed to basic and acidic residues. Residues 47–69 (EEEFNKSMDDNPKKEKATTASKS) are disordered.

This sequence belongs to the TatA/E family. As to quaternary structure, forms a complex with TatC.

It is found in the cell inner membrane. Part of the twin-arginine translocation (Tat) system that transports large folded proteins containing a characteristic twin-arginine motif in their signal peptide across membranes. TatA could form the protein-conducting channel of the Tat system. The protein is Sec-independent protein translocase protein TatA of Chlorobium chlorochromatii (strain CaD3).